Reading from the N-terminus, the 851-residue chain is MAHETPDTPGETYDFRAIEAEWSEVWEREQPFRTPDASDSRPRKYILDMFPYPSGDLHMGHAEAFALGDAVARYWRQQGFNVLHPIGWDSFGLPAENAAIKRGVDPREWTYANIETQKQSMKRYGLSFDWERELHTSDPEYYRWNQWLFLKMHEKGLAYRKDSWVNWDPVDQTVLANEQVLPDGTSDRSGAVVVKKKLTQWYLRITDYADRLVDDLNQLEGTWPAKVISMQRNWIGRSIGAEVDFVVEGRDEPVTVFTTRPDTLHGATFMVVAPDSDLAAELVEGASDEVRERFRGYLERTQRLNEIERSTTDRPKTGIPLGRTAINPVNGERIPVWAADYLLADYGTGAVMAVPAHDQRDLDFARAFDLPVRVVVDTTQPVTGAIRIIPEDGELPDLEEVLPGRTGVALPGEGRLINSGSLNGLSKQPAIKRVIEQLEAEGRGRAAKNYRLRDWLISRQRFWGTPIPIVYDAEGNEIRVPEDQLPVRLPDTEGLDLAPKGKSPLAAATEWTNVPSPVDGSPATRDPDTMDTFMDSSWYWLRFLSPNDATKAFDPADADRWAPIDQYVGGVEHAILHLLYSRFITKVLFDLGYVTFTEPFSALLNQGMVLSGGSKMSKSKGGVDLGSEMDRHGVDAIRLTMAFAGPPEDDIDWEDVSPSGSAKFLARAWRLTGDITSAPEIEWKTGDEALRRVTHRFLAEAPGMLEAFKFNVVIARTMELVNAIRKTIDQGPGGGDAAVREATEVVAIALSLFAPYTAEDMWRRLGREGSVAFAGWRKAERNLLVQSTVTAVVQVDGKVRDKLEVDAKIGADELEALARETAGVKRSTAGRTIDKVIVRAPKIVSITTTAP.

The 'HIGH' region signature appears at 51–61 (PYPSGDLHMGH). The 'KMSKS' region motif lies at 615–619 (KMSKS). ATP is bound at residue Lys618.

The protein belongs to the class-I aminoacyl-tRNA synthetase family.

Its subcellular location is the cytoplasm. It catalyses the reaction tRNA(Leu) + L-leucine + ATP = L-leucyl-tRNA(Leu) + AMP + diphosphate. The polypeptide is Leucine--tRNA ligase (Clavibacter michiganensis subsp. michiganensis (strain NCPPB 382)).